A 163-amino-acid polypeptide reads, in one-letter code: Probable chemoreceptor glutamine deamidase CheD (163 aa).

It belongs to the CheD family.

The enzyme catalyses L-glutaminyl-[protein] + H2O = L-glutamyl-[protein] + NH4(+). Its function is as follows. Probably deamidates glutamine residues to glutamate on methyl-accepting chemotaxis receptors (MCPs), playing an important role in chemotaxis. The polypeptide is Probable chemoreceptor glutamine deamidase CheD (Borrelia turicatae (strain 91E135)).